A 193-amino-acid polypeptide reads, in one-letter code: Fibrillarin-like rRNA/tRNA 2'-O-methyltransferase (193 aa).

S-adenosyl-L-methionine is bound by residues 82–83 (TT), 100–101 (EF), 125–126 (DA), and 145–148 (DVAQ).

It belongs to the methyltransferase superfamily. Fibrillarin family. Interacts with nop5. Component of box C/D small ribonucleoprotein (sRNP) particles that contain rpl7ae, FlpA and nop5, plus a guide RNA.

In terms of biological role, involved in pre-rRNA and tRNA processing. Utilizes the methyl donor S-adenosyl-L-methionine to catalyze the site-specific 2'-hydroxyl methylation of ribose moieties in rRNA and tRNA. Site specificity is provided by a guide RNA that base pairs with the substrate. Methylation occurs at a characteristic distance from the sequence involved in base pairing with the guide RNA. This Methanosarcina mazei (Methanosarcina frisia) protein is Fibrillarin-like rRNA/tRNA 2'-O-methyltransferase.